Consider the following 570-residue polypeptide: Proline--tRNA ligase (570 aa).

A disordered region spans residues 238–257 (ARPAPAEHAEPRPLEKVETP).

This sequence belongs to the class-II aminoacyl-tRNA synthetase family. ProS type 1 subfamily. As to quaternary structure, homodimer.

Its subcellular location is the cytoplasm. It catalyses the reaction tRNA(Pro) + L-proline + ATP = L-prolyl-tRNA(Pro) + AMP + diphosphate. Its function is as follows. Catalyzes the attachment of proline to tRNA(Pro) in a two-step reaction: proline is first activated by ATP to form Pro-AMP and then transferred to the acceptor end of tRNA(Pro). As ProRS can inadvertently accommodate and process non-cognate amino acids such as alanine and cysteine, to avoid such errors it has two additional distinct editing activities against alanine. One activity is designated as 'pretransfer' editing and involves the tRNA(Pro)-independent hydrolysis of activated Ala-AMP. The other activity is designated 'posttransfer' editing and involves deacylation of mischarged Ala-tRNA(Pro). The misacylated Cys-tRNA(Pro) is not edited by ProRS. This is Proline--tRNA ligase from Geobacter sulfurreducens (strain ATCC 51573 / DSM 12127 / PCA).